The sequence spans 79 residues: Phosphoribosylformylglycinamidine synthase subunit PurS (79 aa).

It belongs to the PurS family. As to quaternary structure, homodimer. Part of the FGAM synthase complex composed of 1 PurL, 1 PurQ and 2 PurS subunits.

The protein resides in the cytoplasm. It catalyses the reaction N(2)-formyl-N(1)-(5-phospho-beta-D-ribosyl)glycinamide + L-glutamine + ATP + H2O = 2-formamido-N(1)-(5-O-phospho-beta-D-ribosyl)acetamidine + L-glutamate + ADP + phosphate + H(+). It functions in the pathway purine metabolism; IMP biosynthesis via de novo pathway; 5-amino-1-(5-phospho-D-ribosyl)imidazole from N(2)-formyl-N(1)-(5-phospho-D-ribosyl)glycinamide: step 1/2. Functionally, part of the phosphoribosylformylglycinamidine synthase complex involved in the purines biosynthetic pathway. Catalyzes the ATP-dependent conversion of formylglycinamide ribonucleotide (FGAR) and glutamine to yield formylglycinamidine ribonucleotide (FGAM) and glutamate. The FGAM synthase complex is composed of three subunits. PurQ produces an ammonia molecule by converting glutamine to glutamate. PurL transfers the ammonia molecule to FGAR to form FGAM in an ATP-dependent manner. PurS interacts with PurQ and PurL and is thought to assist in the transfer of the ammonia molecule from PurQ to PurL. The sequence is that of Phosphoribosylformylglycinamidine synthase subunit PurS from Mycobacterium leprae (strain TN).